Consider the following 343-residue polypeptide: Putative mediator of RNA polymerase II transcription subunit 4 (343 aa).

A coiled-coil region spans residues 86 to 125 (LKKLEKHQKIQKEITEIQKEIEEKDKLISTLALNLKDIES). The disordered stretch occupies residues 247 to 343 (ISSPFSIGGN…DEESEEVEWD (97 aa)). The segment covering 271 to 316 (QQQQQQQQQPQQQLSQSQQSQQQTESELQPIQSILQPPQQLNIDLD) has biased composition (low complexity). Acidic residues predominate over residues 317–343 (LNPDLDSSGDDDDEDDDDEESEEVEWD).

It belongs to the Mediator complex subunit 4 family. In terms of assembly, component of the Mediator complex.

The protein localises to the nucleus. In terms of biological role, component of the Mediator complex, a coactivator involved in the regulated transcription of nearly all RNA polymerase II-dependent genes. Mediator functions as a bridge to convey information from gene-specific regulatory proteins to the basal RNA polymerase II transcription machinery. Mediator is recruited to promoters by direct interactions with regulatory proteins and serves as a scaffold for the assembly of a functional preinitiation complex with RNA polymerase II and the general transcription factors. The sequence is that of Putative mediator of RNA polymerase II transcription subunit 4 (med4) from Dictyostelium discoideum (Social amoeba).